The following is a 165-amino-acid chain: 2S seed storage protein 5 (165 aa).

An N-terminal signal peptide occupies residues 1–20; the sequence is MAKLILVFATLALFILLANA. 2 propeptides span residues 21-37 and 71-89; these read SIYR…DVSN and YEAD…DDEN.

Belongs to the 2S seed storage albumins family. The mature protein consists of a small and a large chain linked by disulfide bonds.

This is a 2S seed storage protein. This chain is 2S seed storage protein 5 (SESA5), found in Arabidopsis thaliana (Mouse-ear cress).